The primary structure comprises 765 residues: Ankyrin repeat and protein kinase domain-containing protein 1 (765 aa).

Residues 22-289 form the Protein kinase domain; the sequence is EGDWRLVASG…DITIETDILL (268 aa). ATP is bound by residues 28–36 and K51; that span reads VASGGFSQV. The Proton acceptor role is filled by D145. ANK repeat units lie at residues 361–390, 394–423, 427–456, 460–489, 493–522, 526–555, 559–588, 592–621, 625–654, 658–687, 691–720, and 724–753; these read NKVTPLHFLVAQGSVEQVRLLLAHEVDVDC, SGYTPLLIAAQDQQPDLCALLLAHGADANR, DGWAPLHFAAQNGDDGTARLLLDHGACVDA, EGWTPLHLAAQNNFENVARLLVSRQADPNL, EGKTPLHVAAYFGHVSLVKLLTSQGAELDA, NLRTPLHLAVERGKVRAIQHLLKSGAVPDA, SGYGPLHTAAARGKYLICKMLLRYGASLEL, QGWTPLHLAAYKGHLEIIHLLAESHANMGA, VNWTPLHLAARHGEEAVVSALLQCGADPNA, SGWTPLHLAVQRSTFLSVINLLEHHANVHA, VGWTPAHLAALKGNTAILKVLVEAGAQLDV, and VSCTPLQLALRSRKQGIMSFLEGKEPSVAT.

This sequence belongs to the protein kinase superfamily. TKL Ser/Thr protein kinase family. Highly expressed in brain and weakly expressed in placenta and spinal cord.

It carries out the reaction L-seryl-[protein] + ATP = O-phospho-L-seryl-[protein] + ADP + H(+). The enzyme catalyses L-threonyl-[protein] + ATP = O-phospho-L-threonyl-[protein] + ADP + H(+). This is Ankyrin repeat and protein kinase domain-containing protein 1 (ANKK1) from Homo sapiens (Human).